We begin with the raw amino-acid sequence, 95 residues long: MKDEIIREVYDTLVDRKNNPIDSYTSKLMQDSDKKAEDKILEKLGEEATEVILASKNNEDLVHESADLIFFTILNLAYKGIPLDDVFDELISRHN.

Belongs to the PRA-PH family.

It is found in the cytoplasm. It catalyses the reaction 1-(5-phospho-beta-D-ribosyl)-ATP + H2O = 1-(5-phospho-beta-D-ribosyl)-5'-AMP + diphosphate + H(+). Its pathway is amino-acid biosynthesis; L-histidine biosynthesis; L-histidine from 5-phospho-alpha-D-ribose 1-diphosphate: step 2/9. This is Phosphoribosyl-ATP pyrophosphatase from Methanosphaera stadtmanae (strain ATCC 43021 / DSM 3091 / JCM 11832 / MCB-3).